We begin with the raw amino-acid sequence, 316 residues long: Phosphate acetyltransferase (316 aa).

This sequence belongs to the phosphate acetyltransferase and butyryltransferase family.

The protein localises to the cytoplasm. It carries out the reaction acetyl-CoA + phosphate = acetyl phosphate + CoA. It functions in the pathway metabolic intermediate biosynthesis; acetyl-CoA biosynthesis; acetyl-CoA from acetate: step 2/2. This chain is Phosphate acetyltransferase (pta), found in Rhizobium meliloti (Ensifer meliloti).